Here is a 241-residue protein sequence, read N- to C-terminus: Carboxy-S-adenosyl-L-methionine synthase (241 aa).

S-adenosyl-L-methionine is bound by residues Tyr-38, 63 to 65 (GCS), 88 to 89 (DN), 116 to 117 (DI), Asn-131, and Arg-198.

Belongs to the class I-like SAM-binding methyltransferase superfamily. Cx-SAM synthase family. Homodimer.

It catalyses the reaction prephenate + S-adenosyl-L-methionine = carboxy-S-adenosyl-L-methionine + 3-phenylpyruvate + H2O. Functionally, catalyzes the conversion of S-adenosyl-L-methionine (SAM) to carboxy-S-adenosyl-L-methionine (Cx-SAM). This Pseudoalteromonas translucida (strain TAC 125) protein is Carboxy-S-adenosyl-L-methionine synthase.